A 312-amino-acid polypeptide reads, in one-letter code: Ankyrin repeat family A protein 2 (312 aa).

5 ANK repeats span residues 147-179 (ANSLSAHQLAAQGEMLYLATRIEQENVINHTDE), 180-212 (EGFTPLMWAAAHGQIAVVEFLLQNGADPQLLGK), 213-245 (GRESALSLACSKGYTDIVKMLLDCGVDVNEYDW), 246-278 (NGGTPLLYAVHGNHVKCVKMLLENGADPTIETD), and 279-312 (SGYNSMDLAVALGYRGVQQAIESHLLKLLQNIRE).

As to quaternary structure, interacts (via ANK repeats) with CCDC8 (via PxLPxI/L motif); mediates the interaction with the 3M complex which is composed of CCDC8, CUL7 and OBSL1. Interacts (via ANK repeats) with HDAC4 (via PxLPxI/L motif). Interacts (via ANK repeats) with HDAC5 (via PxLPxI/L motif). Interacts (via ANK repeats) with LRP2/megalin (via PxLPxI/L motif). Interacts (via ANK repeats) with RFX7 (via PxLPxI/L motif). Interacts with AHRR. Interacts with NEK6.

The protein resides in the cytoplasm. It localises to the cytoskeleton. Its subcellular location is the membrane. In terms of biological role, may regulate the interaction between the 3M complex and the histone deacetylases HDAC4 and HDAC5. May also regulate LRP2/megalin. The sequence is that of Ankyrin repeat family A protein 2 (Ankra2) from Mus musculus (Mouse).